A 101-amino-acid chain; its full sequence is Small ribosomal subunit protein uS14 (101 aa).

This sequence belongs to the universal ribosomal protein uS14 family. Part of the 30S ribosomal subunit. Contacts proteins S3 and S10.

Its function is as follows. Binds 16S rRNA, required for the assembly of 30S particles and may also be responsible for determining the conformation of the 16S rRNA at the A site. The chain is Small ribosomal subunit protein uS14 from Paenarthrobacter aurescens (strain TC1).